The sequence spans 531 residues: Methyl-accepting chemotaxis protein McpN (531 aa).

Over 1–24 the chain is Cytoplasmic; sequence MNESVARVFDRILRGLGLKTLNAQ. A helical membrane pass occupies residues 25–45; it reads FLLSYALMFGLAACASVALYL. The Periplasmic segment spans residues 46–174; it reads SMSISPETIN…LMSARADSVQ (129 aa). Residues 52–140 are pilJ-type; sequence ETINVAGAQR…AMLDQVAQPA (89 aa). The short motif at 54–65 is the N-box element; it reads INVAGAQRMLSQ. Arg61 lines the nitrate pocket. The chain crosses the membrane as a helical span at residues 175–195; the sequence is HTQMWIAFGCLLAILVLVVLG. Residues 196-531 lie on the Cytoplasmic side of the membrane; the sequence is RQFGLAPLMR…LRVVLGRFRT (336 aa). The region spanning 201–254 is the HAMP domain; that stretch reads APLMRQLRGLEVALTEVGAANFTHALAAGHADNEIGRIVAGYERMRQDVSGLLA. The Methyl-accepting transducer domain maps to 259 to 495; it reads SAAETDKDVA…DIDRNITNVS (237 aa).

It belongs to the methyl-accepting chemotaxis (MCP) protein family. As to quaternary structure, ligand free ligand-binding domain (LBD) is present in a monomer-dimer equilibrium. Nitrate binding to the periplasmic LBD stabilizes the homodimer.

Its subcellular location is the cell inner membrane. Chemotactic-signal transducers respond to changes in the concentration of attractants and repellents in the environment, transduce a signal from the outside to the inside of the cell, and facilitate sensory adaptation through the variation of the level of methylation. McpN is a chemoreceptor that recognizes specifically nitrate and mediates chemoattraction. Binds nitrate specifically and shows no affinity for other ligands such as nitrite. McpN-mediated taxis occurs only under nitrate starvation conditions. In Pseudomonas aeruginosa (strain ATCC 15692 / DSM 22644 / CIP 104116 / JCM 14847 / LMG 12228 / 1C / PRS 101 / PAO1), this protein is Methyl-accepting chemotaxis protein McpN.